Here is a 702-residue protein sequence, read N- to C-terminus: Polyribonucleotide nucleotidyltransferase (702 aa).

Mg(2+) contacts are provided by D485 and D491. The region spanning 552 to 612 (PRTEIICIDP…EGVKKAISII (61 aa)) is the KH domain. One can recognise an S1 motif domain in the interval 622–690 (GEIYLGKVTK…NQGRINLSRK (69 aa)).

This sequence belongs to the polyribonucleotide nucleotidyltransferase family. Mg(2+) serves as cofactor.

The protein resides in the cytoplasm. The catalysed reaction is RNA(n+1) + phosphate = RNA(n) + a ribonucleoside 5'-diphosphate. In terms of biological role, involved in mRNA degradation. Catalyzes the phosphorolysis of single-stranded polyribonucleotides processively in the 3'- to 5'-direction. In Clostridium botulinum (strain Langeland / NCTC 10281 / Type F), this protein is Polyribonucleotide nucleotidyltransferase.